A 301-amino-acid polypeptide reads, in one-letter code: tRNA uridine(34) hydroxylase (301 aa).

Positions 120 to 214 (SAPDVAVIDT…YLEDVPEDQS (95 aa)) constitute a Rhodanese domain. The active-site Cysteine persulfide intermediate is C174.

Belongs to the TrhO family.

It catalyses the reaction uridine(34) in tRNA + AH2 + O2 = 5-hydroxyuridine(34) in tRNA + A + H2O. Catalyzes oxygen-dependent 5-hydroxyuridine (ho5U) modification at position 34 in tRNAs. This chain is tRNA uridine(34) hydroxylase, found in Jannaschia sp. (strain CCS1).